The following is a 613-amino-acid chain: MRESLVAILVTVISVLGAIHQVKSHEDQPLSGIAVHKITFGLNEKAYVKASPTVLGSNGQHSELVLVQYSSPKPSDDDWIGVFSPADFNASTCPGDNKMVQPPRLCSAPVKFQYANFSNPRYTNTGTGSLKLQLINQRSDFSFALFSGGLLNPKLVAISNKVAFENPNAPVYPRLALGKEWDEMTVTWTSGYGLNLAEPVVEWGVKGGERKLSPAGTLTFARNSMCGAPARTVGWRDPGYIHTAFLKELWPNSKYTYRVGHRLSNGALIWSKEYQFKSSPFPGQNSVQQVVIFGDMGKAEVDGSSEYNDFQRASLNTTKQLIKDLKKTDAVFHIGDICYANGYLSQWDQFIAQIEPIASTVPYMIASGNHERVWPNSGSFYEGLDSGGECGVPAETMFYVPAQNRAKVWYSSDYGMFRFCVADTEHDWREGTEQYNFIEHCLASVDRQKQPWLIFLAHRVLGYSSTYFYAEEGSFAEPMGRESLQKLWQKYKVDIAIYGHAHNYERTCPVYQSVCTSHEKSNYKAPLNGTIHIVAGGGGAGLAEFSDLQPNWSLFRDYDYGFLKLTAIDHSNLLFEYKKSSDGRVHDSFTISKDYRDILACAVDSCPATTLAS.

An N-terminal signal peptide occupies residues 1–24 (MRESLVAILVTVISVLGAIHQVKS). Residues Asn-89 and Asn-116 are each glycosylated (N-linked (GlcNAc...) asparagine). Asp-295 lines the Fe cation pocket. Asn-316 carries an N-linked (GlcNAc...) asparagine glycan. Asp-336 and Tyr-339 together coordinate Fe cation. Asp-336 is a binding site for Zn(2+). The Zn(2+) site is built by Asn-369, His-458, and His-500. Asn-369 serves as a coordination point for substrate. 500–502 (HAH) is a substrate binding site. Fe cation is bound at residue His-502. 2 N-linked (GlcNAc...) asparagine glycosylation sites follow: Asn-528 and Asn-551.

This sequence belongs to the metallophosphoesterase superfamily. Purple acid phosphatase family. In terms of assembly, homodimer. Fe cation serves as cofactor. Zn(2+) is required as a cofactor. In terms of tissue distribution, expressed in roots, stems, leaves, flowers and siliques.

The protein localises to the secreted. This chain is Probable inactive purple acid phosphatase 1 (PAP1), found in Arabidopsis thaliana (Mouse-ear cress).